A 444-amino-acid polypeptide reads, in one-letter code: N-succinylarginine dihydrolase (444 aa).

Substrate is bound by residues 19–28 (AGLSFGNVAS), Asn110, and 137–138 (HR). The active site involves Glu174. Arg214 contributes to the substrate binding site. Residue His250 is part of the active site. 2 residues coordinate substrate: Asp252 and Asn362. Cys368 (nucleophile) is an active-site residue.

It belongs to the succinylarginine dihydrolase family. Homodimer.

The enzyme catalyses N(2)-succinyl-L-arginine + 2 H2O + 2 H(+) = N(2)-succinyl-L-ornithine + 2 NH4(+) + CO2. It functions in the pathway amino-acid degradation; L-arginine degradation via AST pathway; L-glutamate and succinate from L-arginine: step 2/5. Functionally, catalyzes the hydrolysis of N(2)-succinylarginine into N(2)-succinylornithine, ammonia and CO(2). This is N-succinylarginine dihydrolase from Shewanella oneidensis (strain ATCC 700550 / JCM 31522 / CIP 106686 / LMG 19005 / NCIMB 14063 / MR-1).